We begin with the raw amino-acid sequence, 273 residues long: Glutamate racemase (273 aa).

Substrate is bound by residues 19–20 and 51–52; these read DS and YG. C83 functions as the Proton donor/acceptor in the catalytic mechanism. 84-85 lines the substrate pocket; the sequence is NT. C198 serves as the catalytic Proton donor/acceptor. 199 to 200 contributes to the substrate binding site; it reads TH.

This sequence belongs to the aspartate/glutamate racemases family.

The enzyme catalyses L-glutamate = D-glutamate. It participates in cell wall biogenesis; peptidoglycan biosynthesis. Provides the (R)-glutamate required for cell wall biosynthesis. This is Glutamate racemase from Agrobacterium fabrum (strain C58 / ATCC 33970) (Agrobacterium tumefaciens (strain C58)).